Reading from the N-terminus, the 363-residue chain is Phosphoserine aminotransferase (363 aa).

R42 is a binding site for L-glutamate. Pyridoxal 5'-phosphate is bound by residues 76–77 (GR), W102, T156, D175, and Q198. K199 bears the N6-(pyridoxal phosphate)lysine mark. Residue 240–241 (NT) participates in pyridoxal 5'-phosphate binding.

It belongs to the class-V pyridoxal-phosphate-dependent aminotransferase family. SerC subfamily. Homodimer. It depends on pyridoxal 5'-phosphate as a cofactor.

It is found in the cytoplasm. The catalysed reaction is O-phospho-L-serine + 2-oxoglutarate = 3-phosphooxypyruvate + L-glutamate. It catalyses the reaction 4-(phosphooxy)-L-threonine + 2-oxoglutarate = (R)-3-hydroxy-2-oxo-4-phosphooxybutanoate + L-glutamate. The protein operates within amino-acid biosynthesis; L-serine biosynthesis; L-serine from 3-phospho-D-glycerate: step 2/3. It functions in the pathway cofactor biosynthesis; pyridoxine 5'-phosphate biosynthesis; pyridoxine 5'-phosphate from D-erythrose 4-phosphate: step 3/5. Functionally, catalyzes the reversible conversion of 3-phosphohydroxypyruvate to phosphoserine and of 3-hydroxy-2-oxo-4-phosphonooxybutanoate to phosphohydroxythreonine. The polypeptide is Phosphoserine aminotransferase (Shewanella sp. (strain MR-7)).